A 366-amino-acid chain; its full sequence is Protein-methionine-sulfoxide reductase catalytic subunit MsrP (366 aa).

Residues 1-22 (MHNTFTHTKNNTHTKNNTQAKN) are compositionally biased toward low complexity. The tract at residues 1-40 (MHNTFTHTKNNTHTKNNTQAKNSGSQTKSNAVSLNKPRKL) is disordered. The segment at residues 1-76 (MHNTFTHTKN…TLALPASAQA (76 aa)) is a signal peptide (tat-type signal). Residues 23–33 (SGSQTKSNAVS) are compositionally biased toward polar residues. Mo-molybdopterin-binding positions include Asn120, 123 to 124 (YE), Cys178, Thr213, Asn265, Arg270, and 281 to 283 (SIK).

It belongs to the MsrP family. In terms of assembly, heterodimer of a catalytic subunit (MsrP) and a heme-binding subunit (MsrQ). The cofactor is Mo-molybdopterin. Post-translationally, predicted to be exported by the Tat system. The position of the signal peptide cleavage has not been experimentally proven.

It localises to the periplasm. It carries out the reaction L-methionyl-[protein] + a quinone + H2O = L-methionyl-(S)-S-oxide-[protein] + a quinol. The catalysed reaction is L-methionyl-[protein] + a quinone + H2O = L-methionyl-(R)-S-oxide-[protein] + a quinol. Part of the MsrPQ system that repairs oxidized periplasmic proteins containing methionine sulfoxide residues (Met-O), using respiratory chain electrons. Thus protects these proteins from oxidative-stress damage caused by reactive species of oxygen and chlorine generated by the host defense mechanisms. MsrPQ is essential for the maintenance of envelope integrity under bleach stress, rescuing a wide series of structurally unrelated periplasmic proteins from methionine oxidation. The catalytic subunit MsrP is non-stereospecific, being able to reduce both (R-) and (S-) diastereoisomers of methionine sulfoxide. This is Protein-methionine-sulfoxide reductase catalytic subunit MsrP from Yersinia pestis.